The primary structure comprises 30 residues: Snaclec coagulation factor IX/factor X-binding protein subunit B (30 aa).

Cysteine 2 and cysteine 13 are oxidised to a cystine. Residues 9–30 (YEGHCYRVFTEPQNWADAEKFC) enclose the C-type lectin domain.

It belongs to the snaclec family. As to quaternary structure, heterodimer of subunits A and B; disulfide-linked. Post-translationally, glycosylated. As to expression, expressed by the venom gland.

It localises to the secreted. In terms of biological role, anticoagulant protein which binds to the gamma-carboxyglutamic acid-domain regions of factors IX (F9) and factor X (F10) in the presence of calcium with a 1 to 1 stoichiometry. The sequence is that of Snaclec coagulation factor IX/factor X-binding protein subunit B from Bothrops jararaca (Jararaca).